A 372-amino-acid chain; its full sequence is Putative glutamate--cysteine ligase 2 (372 aa).

Belongs to the glutamate--cysteine ligase type 2 family. YbdK subfamily.

It carries out the reaction L-cysteine + L-glutamate + ATP = gamma-L-glutamyl-L-cysteine + ADP + phosphate + H(+). In terms of biological role, ATP-dependent carboxylate-amine ligase which exhibits weak glutamate--cysteine ligase activity. The sequence is that of Putative glutamate--cysteine ligase 2 from Gloeobacter violaceus (strain ATCC 29082 / PCC 7421).